Consider the following 104-residue polypeptide: Thioredoxin (104 aa).

One can recognise a Thioredoxin domain in the interval 2-104 (AIVKVTDSNF…NLAEVIEKHL (103 aa)). A disulfide bond links Cys29 and Cys32.

This sequence belongs to the thioredoxin family.

Its function is as follows. Component of the thioredoxin-thioredoxin reductase system. Participates in various redox reactions through the reversible oxidation of its active center dithiol to a disulfide and catalyzes dithiol-disulfide exchange reactions. This is Thioredoxin (trxA) from Staphylococcus saprophyticus subsp. saprophyticus (strain ATCC 15305 / DSM 20229 / NCIMB 8711 / NCTC 7292 / S-41).